Here is a 375-residue protein sequence, read N- to C-terminus: Growth/differentiation factor 8 (375 aa).

The first 23 residues, 1–23 (MQKLQLCVYIYLFMLIVAGPVDL), serve as a signal peptide directing secretion. Residues 24–266 (NENSEQKENV…VTDTPKRSRR (243 aa)) constitute a propeptide that is removed on maturation. N-linked (GlcNAc...) asparagine glycosylation is present at Asn-71. Intrachain disulfides connect Cys-272-Cys-282, Cys-281-Cys-340, Cys-309-Cys-372, and Cys-313-Cys-374.

It belongs to the TGF-beta family. In terms of assembly, homodimer; disulfide-linked. Interacts with WFIKKN2, leading to inhibit its activity. Interacts with FSTL3. In terms of processing, synthesized as large precursor molecule that undergoes proteolytic cleavage to generate an N-terminal propeptide and a disulfide linked C-terminal dimer, which is the biologically active molecule. The circulating form consists of a latent complex of the C-terminal dimer and other proteins, including its propeptide, which maintain the C-terminal dimer in a latent, inactive state. Ligand activation requires additional cleavage of the prodomain by a tolloid-like metalloproteinase.

It localises to the secreted. Functionally, acts specifically as a negative regulator of skeletal muscle growth. The protein is Growth/differentiation factor 8 (MSTN) of Papio hamadryas (Hamadryas baboon).